We begin with the raw amino-acid sequence, 307 residues long: 4-hydroxythreonine-4-phosphate dehydrogenase (307 aa).

Substrate is bound by residues histidine 126 and threonine 127. 3 residues coordinate a divalent metal cation: histidine 156, histidine 195, and histidine 251. Substrate is bound by residues lysine 259, asparagine 268, and arginine 277.

The protein belongs to the PdxA family. Homodimer. The cofactor is Zn(2+). Mg(2+) serves as cofactor. It depends on Co(2+) as a cofactor.

The protein resides in the cytoplasm. It carries out the reaction 4-(phosphooxy)-L-threonine + NAD(+) = 3-amino-2-oxopropyl phosphate + CO2 + NADH. It functions in the pathway cofactor biosynthesis; pyridoxine 5'-phosphate biosynthesis; pyridoxine 5'-phosphate from D-erythrose 4-phosphate: step 4/5. Catalyzes the NAD(P)-dependent oxidation of 4-(phosphooxy)-L-threonine (HTP) into 2-amino-3-oxo-4-(phosphooxy)butyric acid which spontaneously decarboxylates to form 3-amino-2-oxopropyl phosphate (AHAP). The sequence is that of 4-hydroxythreonine-4-phosphate dehydrogenase from Helicobacter pylori (strain J99 / ATCC 700824) (Campylobacter pylori J99).